We begin with the raw amino-acid sequence, 317 residues long: MKI67 FHA domain-interacting nucleolar phosphoprotein (317 aa).

An N-acetylalanine modification is found at A2. A Glycyl lysine isopeptide (Lys-Gly) (interchain with G-Cter in SUMO2) cross-link involves residue K40. Positions 47 to 125 constitute an RRM domain; it reads GVVYLGHLPS…RLLSCKFMPR (79 aa). At R116 the chain carries Omega-N-methylarginine. Glycyl lysine isopeptide (Lys-Gly) (interchain with G-Cter in SUMO2) cross-links involve residues K181 and K194. The residue at position 203 (R203) is a Citrulline. Residues 203–317 are disordered; it reads RDSEGNQVLP…KRPRKRKSKQ (115 aa). The segment covering 213–233 has biased composition (basic and acidic residues); that stretch reads DQKEGLSGEPRRKEKMMKEDI. Position 219 is a phosphoserine (S219). Residues 238–248 show a composition bias toward basic residues; that stretch reads PKKRKRSRRKK. Phosphoserine is present on S253. Residues T257 and T261 each carry the phosphothreonine modification. Residues 265–284 show a composition bias toward basic and acidic residues; that stretch reads LERRKSQVMEVGGDKDDEII. Omega-N-methylated arginine is present on residues R267 and R268. S270 bears the Phosphoserine mark. A Glycyl lysine isopeptide (Lys-Gly) (interchain with G-Cter in SUMO1); alternate cross-link involves residue K293. K293 is covalently cross-linked (Glycyl lysine isopeptide (Lys-Gly) (interchain with G-Cter in SUMO2); alternate). A Phosphothreonine modification is found at T301. Residues 308–317 are compositionally biased toward basic residues; that stretch reads KRPRKRKSKQ.

In terms of assembly, binds to the FHA domain of MKI67; this interaction is enhanced in mitosis. Phosphorylated. Post-translationally, citrullinated by PADI4. Expressed in brain, heart, hind limb muscles, intestine, liver, skin and spleen.

The protein localises to the nucleus. Its subcellular location is the nucleolus. The protein resides in the chromosome. This Mus musculus (Mouse) protein is MKI67 FHA domain-interacting nucleolar phosphoprotein (Nifk).